Consider the following 723-residue polypeptide: Threonine--tRNA ligase, mitochondrial (723 aa).

S57 carries the phosphoserine modification. One can recognise a TGS domain in the interval 64–126 (RTIKISLPEG…ETDCHLRFLT (63 aa)).

It belongs to the class-II aminoacyl-tRNA synthetase family. As to quaternary structure, homodimer.

It localises to the mitochondrion matrix. The catalysed reaction is tRNA(Thr) + L-threonine + ATP = L-threonyl-tRNA(Thr) + AMP + diphosphate + H(+). Its function is as follows. Catalyzes the attachment of threonine to tRNA(Thr) in a two-step reaction: threonine is first activated by ATP to form Thr-AMP and then transferred to the acceptor end of tRNA(Thr). Also edits incorrectly charged tRNA(Thr) via its editing domain. The chain is Threonine--tRNA ligase, mitochondrial (Tars2) from Rattus norvegicus (Rat).